The primary structure comprises 179 residues: Bifunctional protein PyrR (179 aa).

Positions 97–109 match the PRPP-binding motif; it reads IILTDDVLYTGRT.

Belongs to the purine/pyrimidine phosphoribosyltransferase family. PyrR subfamily.

It carries out the reaction UMP + diphosphate = 5-phospho-alpha-D-ribose 1-diphosphate + uracil. In terms of biological role, regulates the transcription of the pyrimidine nucleotide (pyr) operon in response to exogenous pyrimidines. Functionally, also displays a weak uracil phosphoribosyltransferase activity which is not physiologically significant. This is Bifunctional protein PyrR from Elusimicrobium minutum (strain Pei191).